The primary structure comprises 358 residues: DNA polymerase IV (358 aa).

Residues 4–185 (IIHIDMDCYF…LPLIKIPGVG (182 aa)) form the UmuC domain. The Mg(2+) site is built by Asp-8 and Asp-103. The active site involves Glu-104.

The protein belongs to the DNA polymerase type-Y family. Monomer. The cofactor is Mg(2+).

It is found in the cytoplasm. The catalysed reaction is DNA(n) + a 2'-deoxyribonucleoside 5'-triphosphate = DNA(n+1) + diphosphate. In terms of biological role, poorly processive, error-prone DNA polymerase involved in untargeted mutagenesis. Copies undamaged DNA at stalled replication forks, which arise in vivo from mismatched or misaligned primer ends. These misaligned primers can be extended by PolIV. Exhibits no 3'-5' exonuclease (proofreading) activity. May be involved in translesional synthesis, in conjunction with the beta clamp from PolIII. The protein is DNA polymerase IV of Shewanella denitrificans (strain OS217 / ATCC BAA-1090 / DSM 15013).